We begin with the raw amino-acid sequence, 176 residues long: MEKEGLAKSSDTSIKKEGFISQSLSKDGIPNQSLPDDHIGIENISVEPNKLYEAVSNLRNYGFNYLQCQGGYDEGPGKNLVSFYHFITVDDFQKIEKIKEVRLKVFLKRDSDLSIPSLYKIFKGSDWQERETYDMYGINFIDHPNPTRLLMPEDWRGWPLRKDYIQPDFYELQDAY.

The disordered stretch occupies residues 1-32 (MEKEGLAKSSDTSIKKEGFISQSLSKDGIPNQ). Residues 20–32 (ISQSLSKDGIPNQ) show a composition bias toward polar residues.

Belongs to the complex I 30 kDa subunit family. As to quaternary structure, NDH-1 can be composed of about 15 different subunits; different subcomplexes with different compositions have been identified which probably have different functions.

The protein resides in the cellular thylakoid membrane. The enzyme catalyses a plastoquinone + NADH + (n+1) H(+)(in) = a plastoquinol + NAD(+) + n H(+)(out). It catalyses the reaction a plastoquinone + NADPH + (n+1) H(+)(in) = a plastoquinol + NADP(+) + n H(+)(out). In terms of biological role, NDH-1 shuttles electrons from an unknown electron donor, via FMN and iron-sulfur (Fe-S) centers, to quinones in the respiratory and/or the photosynthetic chain. The immediate electron acceptor for the enzyme in this species is believed to be plastoquinone. Couples the redox reaction to proton translocation, and thus conserves the redox energy in a proton gradient. Cyanobacterial NDH-1 also plays a role in inorganic carbon-concentration. The chain is NAD(P)H-quinone oxidoreductase subunit J from Prochlorococcus marinus (strain MIT 9215).